The following is a 253-amino-acid chain: Imidazole glycerol phosphate synthase subunit HisF (253 aa).

Residues aspartate 11 and aspartate 130 contribute to the active site.

The protein belongs to the HisA/HisF family. In terms of assembly, heterodimer of HisH and HisF.

The protein resides in the cytoplasm. It catalyses the reaction 5-[(5-phospho-1-deoxy-D-ribulos-1-ylimino)methylamino]-1-(5-phospho-beta-D-ribosyl)imidazole-4-carboxamide + L-glutamine = D-erythro-1-(imidazol-4-yl)glycerol 3-phosphate + 5-amino-1-(5-phospho-beta-D-ribosyl)imidazole-4-carboxamide + L-glutamate + H(+). Its pathway is amino-acid biosynthesis; L-histidine biosynthesis; L-histidine from 5-phospho-alpha-D-ribose 1-diphosphate: step 5/9. IGPS catalyzes the conversion of PRFAR and glutamine to IGP, AICAR and glutamate. The HisF subunit catalyzes the cyclization activity that produces IGP and AICAR from PRFAR using the ammonia provided by the HisH subunit. This chain is Imidazole glycerol phosphate synthase subunit HisF, found in Opitutus terrae (strain DSM 11246 / JCM 15787 / PB90-1).